The following is a 231-amino-acid chain: Ribosome maturation factor RimM (231 aa).

Positions 1–29 are disordered; the sequence is MSERDSGSSGRAKAKRQPGAKAPFGPFVR. Residues 150–231 form the PRC barrel domain; sequence TDEYYWVDLV…KIIVDWEADY (82 aa).

Belongs to the RimM family. As to quaternary structure, binds ribosomal protein uS19.

The protein localises to the cytoplasm. An accessory protein needed during the final step in the assembly of 30S ribosomal subunit, possibly for assembly of the head region. Essential for efficient processing of 16S rRNA. May be needed both before and after RbfA during the maturation of 16S rRNA. It has affinity for free ribosomal 30S subunits but not for 70S ribosomes. This chain is Ribosome maturation factor RimM, found in Paraburkholderia phymatum (strain DSM 17167 / CIP 108236 / LMG 21445 / STM815) (Burkholderia phymatum).